The chain runs to 427 residues: Glutamate-1-semialdehyde 2,1-aminomutase (427 aa).

Residue Lys265 is modified to N6-(pyridoxal phosphate)lysine.

This sequence belongs to the class-III pyridoxal-phosphate-dependent aminotransferase family. HemL subfamily. Homodimer. Pyridoxal 5'-phosphate is required as a cofactor.

The protein localises to the cytoplasm. It catalyses the reaction (S)-4-amino-5-oxopentanoate = 5-aminolevulinate. The protein operates within porphyrin-containing compound metabolism; protoporphyrin-IX biosynthesis; 5-aminolevulinate from L-glutamyl-tRNA(Glu): step 2/2. This Burkholderia ambifaria (strain ATCC BAA-244 / DSM 16087 / CCUG 44356 / LMG 19182 / AMMD) (Burkholderia cepacia (strain AMMD)) protein is Glutamate-1-semialdehyde 2,1-aminomutase.